The primary structure comprises 747 residues: Endopolyphosphatase (747 aa).

Residue M1 is a topological domain, cytoplasmic. The helical; Signal-anchor for type II membrane protein transmembrane segment at 2–22 threads the bilayer; sequence LPKTLTIWASLASLAVAQSGQ. The Vacuolar portion of the chain corresponds to 23–747; the sequence is VVFAKNADGK…AEYLEEPDDD (725 aa). N-linked (GlcNAc...) asparagine glycosylation is found at N134, N191, and N463. A disordered region spans residues 570–640; that stretch reads AVATSSEPES…PKFPKDLQPG (71 aa). Acidic residues predominate over residues 577–586; sequence PESDDYDSDL. Positions 591 to 625 are enriched in basic residues; the sequence is KKGKKKGKKGKKGKKGKKGKKKKGKKGKKGKKGKR. Basic and acidic residues predominate over residues 626–635; the sequence is DKSMPPKFPK. The N-linked (GlcNAc...) asparagine glycan is linked to N659.

This sequence belongs to the endopolyphosphatase PPN1 family. A divalent metal cation is required as a cofactor. Post-translationally, processing by proteases in the vacuole may be required for activation.

It localises to the vacuole membrane. It catalyses the reaction [phosphate](n+1) + n H2O = (n+1) phosphate + n H(+). In terms of biological role, catalyzes the hydrolysis of inorganic polyphosphate (polyP) chains of many hundreds of phosphate residues into shorter lengths. The chain is Endopolyphosphatase (PPN1) from Yarrowia lipolytica (strain CLIB 122 / E 150) (Yeast).